A 510-amino-acid chain; its full sequence is Cytochrome P450 705A20 (510 aa).

The chain crosses the membrane as a helical span at residues 7–27 (QHCFSFILLCFFSLLCYSLLF).

The protein belongs to the cytochrome P450 family. Requires heme as cofactor.

It is found in the membrane. The sequence is that of Cytochrome P450 705A20 (CYP705A20) from Arabidopsis thaliana (Mouse-ear cress).